Consider the following 455-residue polypeptide: Bifunctional protein GlmU (455 aa).

Residues 1–226 are pyrophosphorylase; it reads MSLDIVILAA…AMEVQGANDR (226 aa). Residues 8-11, Lys-22, Gln-73, 78-79, 99-101, Gly-136, Glu-151, Asn-166, and Asn-224 contribute to the UDP-N-acetyl-alpha-D-glucosamine site; these read LAAG, GT, and YGD. Position 101 (Asp-101) interacts with Mg(2+). Residue Asn-224 participates in Mg(2+) binding. A linker region spans residues 227–247; that stretch reads KQLSELERHYQLREARRLMAG. Residues 248–455 are N-acetyltransferase; the sequence is GVTLRDPARF…WKRPVKIRKD (208 aa). Residues Arg-330 and Lys-348 each contribute to the UDP-N-acetyl-alpha-D-glucosamine site. The active-site Proton acceptor is His-360. Positions 363 and 374 each coordinate UDP-N-acetyl-alpha-D-glucosamine. Acetyl-CoA is bound by residues Ala-377, 383–384, Ser-402, Ala-420, and Arg-437; that span reads NY.

This sequence in the N-terminal section; belongs to the N-acetylglucosamine-1-phosphate uridyltransferase family. The protein in the C-terminal section; belongs to the transferase hexapeptide repeat family. In terms of assembly, homotrimer. It depends on Mg(2+) as a cofactor.

The protein localises to the cytoplasm. The enzyme catalyses alpha-D-glucosamine 1-phosphate + acetyl-CoA = N-acetyl-alpha-D-glucosamine 1-phosphate + CoA + H(+). The catalysed reaction is N-acetyl-alpha-D-glucosamine 1-phosphate + UTP + H(+) = UDP-N-acetyl-alpha-D-glucosamine + diphosphate. It functions in the pathway nucleotide-sugar biosynthesis; UDP-N-acetyl-alpha-D-glucosamine biosynthesis; N-acetyl-alpha-D-glucosamine 1-phosphate from alpha-D-glucosamine 6-phosphate (route II): step 2/2. The protein operates within nucleotide-sugar biosynthesis; UDP-N-acetyl-alpha-D-glucosamine biosynthesis; UDP-N-acetyl-alpha-D-glucosamine from N-acetyl-alpha-D-glucosamine 1-phosphate: step 1/1. Its pathway is bacterial outer membrane biogenesis; LPS lipid A biosynthesis. Catalyzes the last two sequential reactions in the de novo biosynthetic pathway for UDP-N-acetylglucosamine (UDP-GlcNAc). The C-terminal domain catalyzes the transfer of acetyl group from acetyl coenzyme A to glucosamine-1-phosphate (GlcN-1-P) to produce N-acetylglucosamine-1-phosphate (GlcNAc-1-P), which is converted into UDP-GlcNAc by the transfer of uridine 5-monophosphate (from uridine 5-triphosphate), a reaction catalyzed by the N-terminal domain. The chain is Bifunctional protein GlmU from Pseudomonas savastanoi pv. phaseolicola (strain 1448A / Race 6) (Pseudomonas syringae pv. phaseolicola (strain 1448A / Race 6)).